Here is a 217-residue protein sequence, read N- to C-terminus: MAWFFAPEPVMVTADEALKGGRHPVLENPAPHTVLGTPVTGPWKEGQQRIWIGLGCFWGVEQMYWQMDGVEGTSVGYAGGFTPNPTYREVCSGRTGHTEIVEVVYDPSKISLEQLVARGLEAHDPTQGFRQGNDVGTQYRSAYYTENEEDAARVKAVVDAYGETLKQHGFGEITTEIGVISPSDYFLAEDYHQQYLDKNPDGYCPHHSTGIPCGVEA.

Residue Cys56 is part of the active site.

This sequence belongs to the MsrA Met sulfoxide reductase family.

It carries out the reaction L-methionyl-[protein] + [thioredoxin]-disulfide + H2O = L-methionyl-(S)-S-oxide-[protein] + [thioredoxin]-dithiol. It catalyses the reaction [thioredoxin]-disulfide + L-methionine + H2O = L-methionine (S)-S-oxide + [thioredoxin]-dithiol. Its function is as follows. Has an important function as a repair enzyme for proteins that have been inactivated by oxidation. Catalyzes the reversible oxidation-reduction of methionine sulfoxide in proteins to methionine. The sequence is that of Peptide methionine sulfoxide reductase MsrA from Corynebacterium glutamicum (strain ATCC 13032 / DSM 20300 / JCM 1318 / BCRC 11384 / CCUG 27702 / LMG 3730 / NBRC 12168 / NCIMB 10025 / NRRL B-2784 / 534).